A 75-amino-acid chain; its full sequence is Endogenous retrovirus group K member 24 Np9 protein (75 aa).

Positions 22 to 43 (TAPKRQRPSRTGHDDDGGFVEK) are disordered. The segment covering 32-43 (TGHDDDGGFVEK) has biased composition (basic and acidic residues).

In terms of tissue distribution, transcript detectable in many tumor cell lines and tumor tissues.

Its subcellular location is the nucleus. In terms of biological role, may possess a function in tumorigenesis. The sequence is that of Endogenous retrovirus group K member 24 Np9 protein (ERVK-24) from Homo sapiens (Human).